A 490-amino-acid polypeptide reads, in one-letter code: Dual specificity protein kinase CLK3 (490 aa).

A disordered region spans residues 1-138 (MHHCKRYRSP…SKRSSRSVED (138 aa)). Tyr-7 bears the Phosphotyrosine mark. Ser-9, Ser-49, Ser-51, Ser-67, Ser-76, and Ser-78 each carry phosphoserine. Basic and acidic residues-rich tracts occupy residues 26–56 (YSREHEGRLRYPSRREPPPRRSRSRSHDRIP) and 63–76 (EHRDSDTYRCEERS). Over residues 88-116 (RSRHRRRSRERGPYRTRKHAHHCHKRRTR) the composition is skewed to basic residues. Residues 117 to 130 (SCSSASSRSQQSSK) are compositionally biased toward low complexity. At Ser-135 the chain carries Phosphoserine. One can recognise a Protein kinase domain in the interval 156-472 (YEIVGNLGEG…LAEALLHPFF (317 aa)). ATP contacts are provided by residues 162-170 (LGEGTFGKV) and Lys-186. Asp-283 serves as the catalytic Proton acceptor.

It belongs to the protein kinase superfamily. CMGC Ser/Thr protein kinase family. Lammer subfamily. Autophosphorylates on all three types of residues.

It localises to the nucleus. The protein localises to the cytoplasm. It is found in the cytoplasmic vesicle. Its subcellular location is the secretory vesicle. The protein resides in the acrosome. The catalysed reaction is L-seryl-[protein] + ATP = O-phospho-L-seryl-[protein] + ADP + H(+). It carries out the reaction L-threonyl-[protein] + ATP = O-phospho-L-threonyl-[protein] + ADP + H(+). It catalyses the reaction L-tyrosyl-[protein] + ATP = O-phospho-L-tyrosyl-[protein] + ADP + H(+). Leucettine L41 inhibits its kinase activity and affects the regulation of alternative splicing mediated by phosphorylation of SR proteins. Its function is as follows. Dual specificity kinase acting on both serine/threonine and tyrosine-containing substrates. Phosphorylates serine- and arginine-rich (SR) proteins of the spliceosomal complex. May be a constituent of a network of regulatory mechanisms that enable SR proteins to control RNA splicing and can cause redistribution of SR proteins from speckles to a diffuse nucleoplasmic distribution. Phosphorylates SRSF1 and SRSF3. Regulates the alternative splicing of tissue factor (F3) pre-mRNA in endothelial cells. The protein is Dual specificity protein kinase CLK3 (Clk3) of Rattus norvegicus (Rat).